The following is a 1274-amino-acid chain: Meiosis inhibitor protein 1 (1274 aa).

Expressed predominantly in testis. Weakly expressed in spleen and thymus. Expressed in the ovaries, Fallopian tubes and uterus.

Functionally, required for normal meiotic chromosome synapsis. May be involved in the formation of meiotic double-strand breaks (DSBs) in spermatocytes. In Homo sapiens (Human), this protein is Meiosis inhibitor protein 1.